Here is a 419-residue protein sequence, read N- to C-terminus: 3-isopropylmalate dehydratase large subunit (419 aa).

Residues Cys-300, Cys-360, and Cys-363 each contribute to the [4Fe-4S] cluster site.

It belongs to the aconitase/IPM isomerase family. LeuC type 2 subfamily. As to quaternary structure, heterodimer of LeuC and LeuD. It depends on [4Fe-4S] cluster as a cofactor.

The enzyme catalyses (2R,3S)-3-isopropylmalate = (2S)-2-isopropylmalate. Its pathway is amino-acid biosynthesis; L-leucine biosynthesis; L-leucine from 3-methyl-2-oxobutanoate: step 2/4. Functionally, catalyzes the isomerization between 2-isopropylmalate and 3-isopropylmalate, via the formation of 2-isopropylmaleate. This is 3-isopropylmalate dehydratase large subunit from Clostridium botulinum (strain Eklund 17B / Type B).